The chain runs to 225 residues: NAD(P)H-quinone oxidoreductase subunit K, chloroplastic (225 aa).

[4Fe-4S] cluster-binding residues include Cys43, Cys44, Cys108, and Cys139.

This sequence belongs to the complex I 20 kDa subunit family. As to quaternary structure, NDH is composed of at least 16 different subunits, 5 of which are encoded in the nucleus. The cofactor is [4Fe-4S] cluster.

It is found in the plastid. Its subcellular location is the chloroplast thylakoid membrane. The enzyme catalyses a plastoquinone + NADH + (n+1) H(+)(in) = a plastoquinol + NAD(+) + n H(+)(out). It carries out the reaction a plastoquinone + NADPH + (n+1) H(+)(in) = a plastoquinol + NADP(+) + n H(+)(out). Functionally, NDH shuttles electrons from NAD(P)H:plastoquinone, via FMN and iron-sulfur (Fe-S) centers, to quinones in the photosynthetic chain and possibly in a chloroplast respiratory chain. The immediate electron acceptor for the enzyme in this species is believed to be plastoquinone. Couples the redox reaction to proton translocation, and thus conserves the redox energy in a proton gradient. The sequence is that of NAD(P)H-quinone oxidoreductase subunit K, chloroplastic from Solanum bulbocastanum (Wild potato).